Consider the following 573-residue polypeptide: 3-oxosteroid 1-dehydrogenase (573 aa).

7 to 36 (DLIVVGSGAGACWAPIRAQEQGLKTLVVEK) contributes to the FAD binding site.

The protein belongs to the FAD-dependent oxidoreductase 2 family. 3-oxosteroid dehydrogenase subfamily. The cofactor is FAD.

The protein localises to the cell inner membrane. It catalyses the reaction a 3-oxosteroid + A = a 3-oxo-Delta(1)-steroid + AH2. It functions in the pathway lipid metabolism; steroid degradation. Dehydrogenates steroids by introducing a double bond in steroid ring A. The protein is 3-oxosteroid 1-dehydrogenase of Comamonas testosteroni (Pseudomonas testosteroni).